Here is a 245-residue protein sequence, read N- to C-terminus: UPF0246 protein LBUL_1917 (245 aa).

This sequence belongs to the UPF0246 family.

This chain is UPF0246 protein LBUL_1917, found in Lactobacillus delbrueckii subsp. bulgaricus (strain ATCC BAA-365 / Lb-18).